The sequence spans 277 residues: Putative phosphoenolpyruvate synthase regulatory protein (277 aa).

157-164 contributes to the ADP binding site; that stretch reads GVSRSGKT.

Belongs to the pyruvate, phosphate/water dikinase regulatory protein family. PSRP subfamily.

The enzyme catalyses [pyruvate, water dikinase] + ADP = [pyruvate, water dikinase]-phosphate + AMP + H(+). The catalysed reaction is [pyruvate, water dikinase]-phosphate + phosphate + H(+) = [pyruvate, water dikinase] + diphosphate. In terms of biological role, bifunctional serine/threonine kinase and phosphorylase involved in the regulation of the phosphoenolpyruvate synthase (PEPS) by catalyzing its phosphorylation/dephosphorylation. The chain is Putative phosphoenolpyruvate synthase regulatory protein from Vibrio cholerae serotype O1 (strain ATCC 39541 / Classical Ogawa 395 / O395).